Consider the following 521-residue polypeptide: Non-specific phospholipase C5 (521 aa).

Residues 478-487 (SKKARERGGD) show a composition bias toward basic and acidic residues. The segment at 478-521 (SKKARERGGDENDIVFCVDDDDDHNVVKPPPSQSEPSHATPWSN) is disordered. A compositionally biased stretch (polar residues) spans 511–521 (SEPSHATPWSN).

Belongs to the bacterial phospholipase C family. In terms of tissue distribution, specifically expressed in flowers.

The protein resides in the cytoplasm. It is found in the cytosol. It carries out the reaction a 1,2-diacyl-sn-glycero-3-phosphocholine + H2O = phosphocholine + a 1,2-diacyl-sn-glycerol + H(+). Its function is as follows. Non-specific phospholipase C (PLC) which assumes minor PLC activity during inorganic phosphate starvation. Can hydrolyze both phosphatidylcholine (PC) and phosphatidylethanolamine (PE). Required for normal accumulation of digalactosyldiacylglycerol (DGDG) during phosphate limitation and may contribute to the conversion of phospholipids to diacylglycerol, the substrate for galactolipid synthesis. This is Non-specific phospholipase C5 (NPC5) from Arabidopsis thaliana (Mouse-ear cress).